A 734-amino-acid chain; its full sequence is Regulator of G-protein signaling rgs-6 (734 aa).

Positions 1–24 (MSTPCSGNEPATPTNTSPNNETSN) are disordered. Residues 8–24 (NEPATPTNTSPNNETSN) are compositionally biased toward low complexity. Residues 46 to 157 (IFKKVIRDPV…YDCWPRFLRS (112 aa)) enclose the RGS domain. 3 disordered regions span residues 162–236 (QPSF…SPTH), 489–515 (HAVSKSDPNPSAGTSQDRMASGVYSPA), and 538–734 (VNAG…AAYV). Residues 166 to 176 (TDEELAADDED) are compositionally biased toward acidic residues. Residues 180–191 (HSQPTSLNNTNE) show a composition bias toward polar residues. Low complexity predominate over residues 194–208 (AAAQQSQPAPNAPAA). Polar residues-rich tracts occupy residues 494-506 (SDPNPSAGTSQDR) and 538-557 (VNAGSASTSSNNVSEPSKNR). Basic and acidic residues-rich tracts occupy residues 563–585 (SKTEKKVVKPESEKEKLKPRSDD) and 606–619 (TTEEPLKRMGKSGD). Residues 642 to 694 (AAAAAAGASPSTSAPSTSTSVQTKTTTSPTKSPTSTTITTSGTTTSATSSVAT) show a composition bias toward low complexity. 2 stretches are compositionally biased toward polar residues: residues 705–715 (SASTPATSSQL) and 724–734 (RESSWQTAAYV).

The sequence is that of Regulator of G-protein signaling rgs-6 from Caenorhabditis elegans.